Consider the following 430-residue polypeptide: MKVSTLIIVSIPIVSGLQIKDTVGTTTENTFWYQLFGTPSRSQPAAVAATAAGTEVQGFTPISTSSSSSSSSAAPWYQGLFGVGRTTLGQVTTPSRTSTTTTTSNPIAPTTSIANSNNLFGTDTAPTTTTTTNARSRSRSTPVTVSGDNVLTLFGNPNLSTGNDQSNSVSKTTAETTTTSSAPSSSSRVQPTVINGGGSDGVLTLFGNSEALSNFDSTTVVDSDSTARITPIASASASSGSSTKDNDSDSSSARGIKSIPNSSEFLASLINGLGSGGGGNGSGSNTNSYKNHSTTSTTSKYFNSSSTATKLSSSKSIYSNSTTSRSSLSVSSSSTDGGGGANLFGSLLNSVAAVSRTLAAESTLSTGTTTTSDSANSNTKDYSSYSGTITSFPSTTGSLSGDGNKLIGGNKYLISFMWTNLILTMIMLFT.

The signal sequence occupies residues 1–16 (MKVSTLIIVSIPIVSG). Disordered stretches follow at residues 88–195 (LGQV…TVIN), 232–257 (IASASASSGSSTKDNDSDSSSARGIK), 278–302 (GGNGSGSNTNSYKNHSTTSTTSKYF), and 314–336 (SKSIYSNSTTSRSSLSVSSSSTD). 2 stretches are compositionally biased toward low complexity: residues 92-112 (TTPSRTSTTTTTSNPIAPTTS) and 122-135 (TDTAPTTTTTTNAR). Polar residues predominate over residues 141-167 (TPVTVSGDNVLTLFGNPNLSTGNDQSN). Low complexity-rich tracts occupy residues 168–187 (SVSKTTAETTTTSSAPSSSS) and 233–253 (ASASASSGSSTKDNDSDSSSA). Residues 289–302 (YKNHSTTSTTSKYF) show a composition bias toward polar residues. Residues 314 to 335 (SKSIYSNSTTSRSSLSVSSSST) are compositionally biased toward low complexity. The GPI-anchor amidated glycine moiety is linked to residue Gly401. Positions 402-430 (DGNKLIGGNKYLISFMWTNLILTMIMLFT) are cleaved as a propeptide — removed in mature form.

The protein resides in the cell membrane. Its function is as follows. Putative adhesin which is involved in cell adhesion and virulence. This chain is Probable GPI-anchored adhesin-like protein PGA32 (PGA32), found in Candida albicans (strain SC5314 / ATCC MYA-2876) (Yeast).